The following is a 525-amino-acid chain: MEAPTLSELEGLRYSELQKLAKTVGLKANLKADKLLKDLKVHFYPESKDESPDYDGGSSLTDTDELNSSQEKDEPVSVSFVTHRRGRGRKPLKNHDTPKDEFLSVSVGAGTESLASETDNTQHQNCLESKKKEVSPPTIDNKHRKRSRSEDTSKQNNLETTEKRQKKASDITSAPSAGKIPRYVGRLSKPESKPSTPNFKKLHEAHFKKMESIDKYMERKQKRLDTVSSSIQEMKMLTKKSNLLKLVEKTPVSDIKKPVKSRLSLLSSLPPTTGASPSRTPTNQRRSGRFSAANKSILFDRSGFKPSVLSSSKMNVRFSEATKDNEHKRSLIKTPARKSSSFLAITPESEPRQMLPNVKKTPARKSLSVLAVTPESEPKQMLPSVKKNEPMTTPEKAKKTDLNTTIQPSTVILESTCPQNKEIAITPFKFTAQTTETPNTNKKGKFNLQASLSRPLGYQPHKGKLKPWGGSEENKCGSNNNVSVLKNNFKQPHLQTREDRRKQHEQDRKGKRDQTLGTRRGVPVQ.

4 disordered regions span residues Phe-43 to His-203, Thr-250 to Ala-293, Thr-373 to Lys-398, and Leu-452 to Gln-525. Residues Ser-58 to Ser-69 are compositionally biased toward polar residues. Residues Thr-82–Leu-92 are compositionally biased toward basic residues. Positions Lys-93–Phe-102 are enriched in basic and acidic residues. Residues Ser-113–Leu-127 show a composition bias toward polar residues. The segment covering Thr-160 to Ser-169 has biased composition (basic and acidic residues). Residues Pro-270 to Arg-285 show a composition bias toward polar residues. The segment covering Cys-476–Leu-494 has biased composition (polar residues). Residues Gln-495–Gln-514 are compositionally biased toward basic and acidic residues.

Belongs to the NUSAP family. As to quaternary structure, interacts with DNA, microtubules, ipo7, kpna2 and kpnb1. Microtubule stabilization is inhibited by ipo7 and kpna2, while microtubule bundling is inhibited by kpnb1. Active GTP-bound ran causes dissociation of ipo7 and kpnb1.

It localises to the cytoplasm. Its subcellular location is the nucleus. It is found in the cytoskeleton. The protein resides in the spindle. Its function is as follows. Microtubule-associated protein with the capacity to bundle and stabilize microtubules. May associate with chromosomes and promote the organization of meiotic or mitotic spindle microtubules around them. This Xenopus laevis (African clawed frog) protein is Nucleolar and spindle-associated protein 1-C (nusap1-c).